We begin with the raw amino-acid sequence, 195 residues long: Casparian strip membrane protein 3 (195 aa).

Topologically, residues 1–33 (MSTTIDVPESNNVAKEKVLLLGARPRPGGWKKG) are cytoplasmic. A helical transmembrane segment spans residues 34–54 (VAIMDFILRLGAIAAAPGAAA). At 55 to 86 (TMGTSDQTLPFFTQFFQFEASYDSFTTFQFFV) the chain is on the extracellular side. Residues 87–107 (ITMALVAGYLVLSLPFSIVVI) traverse the membrane as a helical segment. The Cytoplasmic portion of the chain corresponds to 108–116 (IRPHAVGPR). A helical membrane pass occupies residues 117 to 137 (LFLIILDTVFLTLATASGASA). Topologically, residues 138-169 (AAIVYLAHNGNQDSNWLAICNQFGDFCAQTSG) are extracellular. The chain crosses the membrane as a helical span at residues 170 to 190 (AVVSSLVSVVIFVLLIVMSAL). Topologically, residues 191 to 195 (ALRRN) are cytoplasmic.

It belongs to the Casparian strip membrane proteins (CASP) family. As to quaternary structure, homodimer and heterodimers.

It localises to the cell membrane. Regulates membrane-cell wall junctions and localized cell wall deposition. Required for establishment of the Casparian strip membrane domain (CSD) and the subsequent formation of Casparian strips, a cell wall modification of the root endodermis that determines an apoplastic barrier between the intraorganismal apoplasm and the extraorganismal apoplasm and prevents lateral diffusion. This is Casparian strip membrane protein 3 from Glycine max (Soybean).